A 343-amino-acid polypeptide reads, in one-letter code: Ribosomal RNA small subunit methyltransferase C (343 aa).

The protein belongs to the methyltransferase superfamily. RsmC family. In terms of assembly, monomer.

The protein resides in the cytoplasm. It catalyses the reaction guanosine(1207) in 16S rRNA + S-adenosyl-L-methionine = N(2)-methylguanosine(1207) in 16S rRNA + S-adenosyl-L-homocysteine + H(+). Functionally, specifically methylates the guanine in position 1207 of 16S rRNA in the 30S particle. In Escherichia coli O157:H7, this protein is Ribosomal RNA small subunit methyltransferase C.